Here is a 1588-residue protein sequence, read N- to C-terminus: Pentafunctional AROM polypeptide (1588 aa).

Residues 1–392 form a 3-dehydroquinate synthase region; the sequence is MVQLAKVPIL…YGDSAQFVSD (392 aa). NAD(+)-binding positions include 43-45, 78-81, 109-111, and aspartate 114; these read DTN, ETSK, and GGV. Arginine 125 contacts 7-phospho-2-dehydro-3-deoxy-D-arabino-heptonate. 134–135 lines the NAD(+) pocket; it reads TS. 7-phospho-2-dehydro-3-deoxy-D-arabino-heptonate-binding residues include aspartate 141 and lysine 147. Lysine 156 serves as a coordination point for NAD(+). Asparagine 157 lines the 7-phospho-2-dehydro-3-deoxy-D-arabino-heptonate pocket. NAD(+)-binding positions include 174–177 and asparagine 185; that span reads WLET. Position 189 (glutamate 189) interacts with Zn(2+). Residues 189 to 192 and lysine 258 contribute to the 7-phospho-2-dehydro-3-deoxy-D-arabino-heptonate site; that span reads EVIK. Glutamate 268 (proton acceptor; for 3-dehydroquinate synthase activity) is an active-site residue. Residues 272 to 276 and histidine 279 each bind 7-phospho-2-dehydro-3-deoxy-D-arabino-heptonate; that span reads RNLLN. Histidine 279 serves as a coordination point for Zn(2+). The active-site Proton acceptor; for 3-dehydroquinate synthase activity is histidine 283. 2 residues coordinate 7-phospho-2-dehydro-3-deoxy-D-arabino-heptonate: histidine 295 and lysine 364. A Zn(2+)-binding site is contributed by histidine 295. The tract at residues 405–871 is EPSP synthase; sequence VYPFKDIPAD…WDVLHSELGA (467 aa). The active-site For EPSP synthase activity is cysteine 853. Residues 890 to 1080 form a shikimate kinase region; the sequence is SVVIIGMRAA…IPSGRSAFVC (191 aa). An ATP-binding site is contributed by 895-902; that stretch reads GMRAAGKT. Residues 1081 to 1293 are 3-dehydroquinase; that stretch reads LTFDDLTEQT…AAPGQLTVAQ (213 aa). Histidine 1198 functions as the Proton acceptor; for 3-dehydroquinate dehydratase activity in the catalytic mechanism. Lysine 1227 (schiff-base intermediate with substrate; for 3-dehydroquinate dehydratase activity) is an active-site residue. Residues 1306–1588 form a shikimate dehydrogenase region; it reads PKELFVVGKP…KAIFDAVTKE (283 aa).

This sequence in the N-terminal section; belongs to the sugar phosphate cyclases superfamily. Dehydroquinate synthase family. In the 2nd section; belongs to the EPSP synthase family. The protein in the 3rd section; belongs to the shikimate kinase family. It in the 4th section; belongs to the type-I 3-dehydroquinase family. This sequence in the C-terminal section; belongs to the shikimate dehydrogenase family. As to quaternary structure, homodimer. Zn(2+) serves as cofactor.

It localises to the cytoplasm. The catalysed reaction is 7-phospho-2-dehydro-3-deoxy-D-arabino-heptonate = 3-dehydroquinate + phosphate. It carries out the reaction 3-dehydroquinate = 3-dehydroshikimate + H2O. The enzyme catalyses shikimate + NADP(+) = 3-dehydroshikimate + NADPH + H(+). It catalyses the reaction shikimate + ATP = 3-phosphoshikimate + ADP + H(+). The catalysed reaction is 3-phosphoshikimate + phosphoenolpyruvate = 5-O-(1-carboxyvinyl)-3-phosphoshikimate + phosphate. It functions in the pathway metabolic intermediate biosynthesis; chorismate biosynthesis; chorismate from D-erythrose 4-phosphate and phosphoenolpyruvate: step 2/7. Its pathway is metabolic intermediate biosynthesis; chorismate biosynthesis; chorismate from D-erythrose 4-phosphate and phosphoenolpyruvate: step 3/7. It participates in metabolic intermediate biosynthesis; chorismate biosynthesis; chorismate from D-erythrose 4-phosphate and phosphoenolpyruvate: step 4/7. The protein operates within metabolic intermediate biosynthesis; chorismate biosynthesis; chorismate from D-erythrose 4-phosphate and phosphoenolpyruvate: step 5/7. It functions in the pathway metabolic intermediate biosynthesis; chorismate biosynthesis; chorismate from D-erythrose 4-phosphate and phosphoenolpyruvate: step 6/7. The AROM polypeptide catalyzes 5 consecutive enzymatic reactions in prechorismate polyaromatic amino acid biosynthesis. The polypeptide is Pentafunctional AROM polypeptide (Saccharomyces cerevisiae (strain Lalvin EC1118 / Prise de mousse) (Baker's yeast)).